The chain runs to 61 residues: UPF0312 protein (61 aa).

This sequence belongs to the UPF0312 family.

This is UPF0312 protein from Delftia acidovorans (Pseudomonas acidovorans).